We begin with the raw amino-acid sequence, 239 residues long: 1-(5-phosphoribosyl)-5-[(5-phosphoribosylamino)methylideneamino] imidazole-4-carboxamide isomerase (239 aa).

Catalysis depends on D8, which acts as the Proton acceptor. D129 serves as the catalytic Proton donor.

This sequence belongs to the HisA/HisF family.

The protein resides in the cytoplasm. The enzyme catalyses 1-(5-phospho-beta-D-ribosyl)-5-[(5-phospho-beta-D-ribosylamino)methylideneamino]imidazole-4-carboxamide = 5-[(5-phospho-1-deoxy-D-ribulos-1-ylimino)methylamino]-1-(5-phospho-beta-D-ribosyl)imidazole-4-carboxamide. It participates in amino-acid biosynthesis; L-histidine biosynthesis; L-histidine from 5-phospho-alpha-D-ribose 1-diphosphate: step 4/9. This chain is 1-(5-phosphoribosyl)-5-[(5-phosphoribosylamino)methylideneamino] imidazole-4-carboxamide isomerase, found in Legionella pneumophila (strain Corby).